Here is an 893-residue protein sequence, read N- to C-terminus: UPF0182 protein CLM_0018 (893 aa).

7 consecutive transmembrane segments (helical) span residues 9-29 (IPLF…NFII), 49-69 (AIII…WMYY), 94-114 (LFFI…SSSY), 154-174 (VIIS…FILE), 202-222 (LAIV…IKIW), 246-266 (FYKI…LSIV), and 273-293 (VSVC…ASFL).

The protein belongs to the UPF0182 family.

It localises to the cell membrane. This is UPF0182 protein CLM_0018 from Clostridium botulinum (strain Kyoto / Type A2).